Reading from the N-terminus, the 865-residue chain is cGMP-specific 3',5'-cyclic phosphodiesterase (865 aa).

Phosphoserine is present on Ser92. GAF domains lie at 154–304 and 336–493; these read DVTA…GIVL and SLEV…GLGI. In terms of domain architecture, PDEase spans 526–850; the sequence is ETRELQSLAA…QKWQALAEQQ (325 aa). Catalysis depends on His603, which acts as the Proton donor. 4 residues coordinate Zn(2+): His607, His643, Asp644, and Asp754. Asp644 contacts Mg(2+). Gln807 is a 3',5'-cyclic GMP binding site.

This sequence belongs to the cyclic nucleotide phosphodiesterase family. The cofactor is Zn(2+). Mg(2+) serves as cofactor. Phosphorylation is regulated by binding of cGMP to the two allosteric sites. Phosphorylation by PRKG1 leads to its activation.

The enzyme catalyses 3',5'-cyclic GMP + H2O = GMP + H(+). It functions in the pathway purine metabolism; 3',5'-cyclic GMP degradation; GMP from 3',5'-cyclic GMP: step 1/1. Most potently inhibited by zaprinast and dipyridamole. Plays a role in signal transduction by regulating the intracellular concentration of cyclic nucleotides. This phosphodiesterase catalyzes the specific hydrolysis of cGMP to 5'-GMP. Specifically regulates nitric-oxide-generated cGMP. The polypeptide is cGMP-specific 3',5'-cyclic phosphodiesterase (PDE5A) (Bos taurus (Bovine)).